The primary structure comprises 588 residues: Secreted triacylglycerol lipase LIP1 (588 aa).

The N-terminal stretch at 1-20 is a signal peptide; the sequence is MRFSGFVSGLGLGLLTAVSA. The active-site Acyl-ester intermediate is the S258. N-linked (GlcNAc...) asparagine glycosylation is present at N400.

The protein belongs to the type-B carboxylesterase/lipase family.

It localises to the secreted. The enzyme catalyses a triacylglycerol + H2O = a diacylglycerol + a fatty acid + H(+). In terms of biological role, secreted acylglycerol lipase required for efficient utilization of saturated triglyceride lipids. Is not involved in virulence. This is Secreted triacylglycerol lipase LIP1 from Gibberella zeae (strain ATCC MYA-4620 / CBS 123657 / FGSC 9075 / NRRL 31084 / PH-1) (Wheat head blight fungus).